Here is a 146-residue protein sequence, read N- to C-terminus: VHWTAEEKQLITGLWGKVNVADCGAEALARLLIVYPWTQRFFASFGNLSSPTAISGNPMVRAHGKKVLTSFGDAVKNLDNIKNTFSQLSELHCDKLHVDPENFRLLGDILIIVLAAHFTKDFTPDCQAAWQKLVRVVAHALARKYH.

A Globin domain is found at 2–146 (HWTAEEKQLI…VAHALARKYH (145 aa)). The heme b site is built by His-63 and His-92.

The protein belongs to the globin family. Heterotetramer of two alpha chains and two beta chains. Red blood cells.

In terms of biological role, involved in oxygen transport from the lung to the various peripheral tissues. This chain is Hemoglobin subunit beta (HBB), found in Chloephaga melanoptera (Andean goose).